A 115-amino-acid chain; its full sequence is T cell receptor delta variable 1 (115 aa).

The signal sequence occupies residues methionine 1–alanine 21. Residues glutamine 22–glutamate 115 form the Ig-like domain. Cysteines 43 and 111 form a disulfide.

In terms of assembly, gamma-delta TR is a heterodimer composed of a gamma and delta chain; disulfide-linked. The gamma-delta TR is associated with the transmembrane signaling CD3 coreceptor proteins following the stoichiometry: a single gamma-delta TR heterodimer associates with one CD3D-CD3E heterodimer, one CD3G-CD3E heterodimer and one CD247 homodimer forming a stable octameric structure. Upon activation, gamma-delta TR complex associates with FCER1G to initiate intracellular signaling.

Its subcellular location is the cell membrane. V region of the variable domain of T cell receptor (TR) delta chain that participates in the antigen recognition. Gamma-delta TRs recognize a variety of self and foreign non-peptide antigens frequently expressed at the epithelial boundaries between the host and external environment, including endogenous lipids presented by MH-like protein CD1D and phosphoantigens presented by butyrophilin-like molecule BTN3A1. Upon antigen recognition induces rapid, innate-like immune responses involved in pathogen clearance and tissue repair. Binding of gamma-delta TR complex to antigen triggers phosphorylation of immunoreceptor tyrosine-based activation motifs (ITAMs) in the CD3 chains by the LCK and FYN kinases, allowing the recruitment, phosphorylation, and activation of ZAP70 that facilitates phosphorylation of the scaffolding proteins LCP2 and LAT. This lead to the formation of a supramolecular signalosome that recruits the phospholipase PLCG1, resulting in calcium mobilization and ERK activation, ultimately leading to T cell expansion and differentiation into effector cells. Gamma-delta TRs are produced through somatic rearrangement of a limited repertoire of variable (V), diversity (D), and joining (J) genes. The potential diversity of gamma-delta TRs is conferred by the unique ability to rearrange (D) genes in tandem and to utilize all three reading frames. The combinatorial diversity is considerably increased by the sequence exonuclease trimming and random nucleotide (N) region additions which occur during the V-(D)-J rearrangements. This Homo sapiens (Human) protein is T cell receptor delta variable 1.